Reading from the N-terminus, the 189-residue chain is Flavin prenyltransferase UbiX (189 aa).

FMN is bound by residues 10-12 (GAS), S37, 88-91 (SIKT), and R123. Residues Y153 and R169 each contribute to the dimethylallyl phosphate site.

It belongs to the UbiX/PAD1 family.

The catalysed reaction is dimethylallyl phosphate + FMNH2 = prenylated FMNH2 + phosphate. It functions in the pathway cofactor biosynthesis; ubiquinone biosynthesis. Flavin prenyltransferase that catalyzes the synthesis of the prenylated FMN cofactor (prenyl-FMN) for 4-hydroxy-3-polyprenylbenzoic acid decarboxylase UbiD. The prenyltransferase is metal-independent and links a dimethylallyl moiety from dimethylallyl monophosphate (DMAP) to the flavin N5 and C6 atoms of FMN. This is Flavin prenyltransferase UbiX from Salmonella typhi.